The chain runs to 178 residues: Interleukin-1 receptor antagonist protein (178 aa).

Residues 1–26 form the signal peptide; sequence MEICWGPYSHLISLLLILLFHSEAAC. A disulfide bridge links C92 with C142. N-linked (GlcNAc...) asparagine glycosylation occurs at N110.

This sequence belongs to the IL-1 family.

The protein resides in the secreted. It is found in the cytoplasm. Anti-inflammatory antagonist of interleukin-1 family of proinflammatory cytokines such as interleukin-1beta/IL1B and interleukin-1alpha/IL1A. Protects from immune dysregulation and uncontrolled systemic inflammation triggered by IL1 for a range of innate stimulatory agents such as pathogens. The polypeptide is Interleukin-1 receptor antagonist protein (Il1rn) (Mus musculus (Mouse)).